A 494-amino-acid polypeptide reads, in one-letter code: Cobyric acid synthase (494 aa).

Residues 248 to 444 form the GATase cobBQ-type domain; it reads EIEIAIIKLP…LHGIFENDEW (197 aa). Cysteine 329 (nucleophile) is an active-site residue. Residue histidine 436 is part of the active site.

Belongs to the CobB/CobQ family. CobQ subfamily.

The protein operates within cofactor biosynthesis; adenosylcobalamin biosynthesis. Catalyzes amidations at positions B, D, E, and G on adenosylcobyrinic A,C-diamide. NH(2) groups are provided by glutamine, and one molecule of ATP is hydrogenolyzed for each amidation. This chain is Cobyric acid synthase, found in Prochlorococcus marinus (strain NATL1A).